The primary structure comprises 339 residues: Ketol-acid reductoisomerase (NADP(+)) (339 aa).

The KARI N-terminal Rossmann domain maps to 1–182; that stretch reads MKIYYEKDAD…GNTRAGVIET (182 aa). Residues 24 to 27, Ser-51, Ser-53, and 83 to 86 contribute to the NADP(+) site; these read YGSQ and DEKQ. His-108 is an active-site residue. An NADP(+)-binding site is contributed by Gly-134. A KARI C-terminal knotted domain is found at 183 to 328; sequence SFREETETDL…EKLRGMMHWA (146 aa). 4 residues coordinate Mg(2+): Asp-191, Glu-195, Glu-227, and Glu-231. A substrate-binding site is contributed by Ser-252.

It belongs to the ketol-acid reductoisomerase family. Requires Mg(2+) as cofactor.

The catalysed reaction is (2R)-2,3-dihydroxy-3-methylbutanoate + NADP(+) = (2S)-2-acetolactate + NADPH + H(+). The enzyme catalyses (2R,3R)-2,3-dihydroxy-3-methylpentanoate + NADP(+) = (S)-2-ethyl-2-hydroxy-3-oxobutanoate + NADPH + H(+). It participates in amino-acid biosynthesis; L-isoleucine biosynthesis; L-isoleucine from 2-oxobutanoate: step 2/4. It functions in the pathway amino-acid biosynthesis; L-valine biosynthesis; L-valine from pyruvate: step 2/4. Functionally, involved in the biosynthesis of branched-chain amino acids (BCAA). Catalyzes an alkyl-migration followed by a ketol-acid reduction of (S)-2-acetolactate (S2AL) to yield (R)-2,3-dihydroxy-isovalerate. In the isomerase reaction, S2AL is rearranged via a Mg-dependent methyl migration to produce 3-hydroxy-3-methyl-2-ketobutyrate (HMKB). In the reductase reaction, this 2-ketoacid undergoes a metal-dependent reduction by NADPH to yield (R)-2,3-dihydroxy-isovalerate. This is Ketol-acid reductoisomerase (NADP(+)) from Hyphomonas neptunium (strain ATCC 15444).